Here is a 460-residue protein sequence, read N- to C-terminus: Beta-1,3-xylanase TXYA (460 aa).

The N-terminal stretch at 1–22 (MKKLAKMISVATLGACAFQAHA) is a signal peptide. In terms of domain architecture, GH26 spans 23–337 (LDGKLVPDQG…LSDPKFIRHS (315 aa)). E138 serves as the catalytic Proton donor. Catalysis depends on E234, which acts as the Nucleophile. The segment at 347–371 (GNSDGGNGGDNGGDNGGDNGGETPE) is disordered. Residues 348-366 (NSDGGNGGDNGGDNGGDNG) show a composition bias toward gly residues. Residues 368-460 (ETPENCTDDF…TVTFTNQVCN (93 aa)) are carbohydrate binding module (CBM). 2 cysteine pairs are disulfide-bonded: C373/C459 and C404/C409.

It belongs to the glycosyl hydrolase 26 family.

The enzyme catalyses Random hydrolysis of (1-&gt;3)-beta-D-glycosidic linkages in (1-&gt;3)-beta-D-xylans.. With respect to regulation, completely inhibited by Cu(2+), Hg(2+) and N-bromosuccinimide. Strongly inhibited by Ag(+), Zn(2+) and Pb(2+). Moderately inhibited by Fe(3+), Al(3+), Mn(2+), dithiothreitol and p-chloromercuribenzoic acid. Slightly activated by Mg(2+) and Ca(2+). Unaffected by Na(+), K(+), Ba(2+), EDTA, iodoacetic acid and N-ethylmalaimide. Functionally, catalyzes the hydrolysis of beta-1,3-xylan into oligosaccharides, mainly xylotriose and xylobiose with smaller amounts of xylotetraose, xylose, xylopentaose and xylohexaose. Weakly active toward beta-1,3-xylotriose, yielding xylose and xylobiose. Converts beta-1,3-xylotetraose into xylotriose, xylobiose and xylose. Converts beta-1,3-xylopentaose into xylotetraose, xylotriose, xylobiose and xylose. Does not hydrolyze xylobiose, p-nitrophenyl-beta-xyloside, beta-1,4-xylan, curdlan or carboxymethylcellulose. This Vibrio sp protein is Beta-1,3-xylanase TXYA.